The primary structure comprises 286 residues: uncharacterized protein (286 aa).

His-183 functions as the Proton donor in the catalytic mechanism. The active-site Nucleophile is Cys-277.

This sequence belongs to the DDAH family.

This is an uncharacterized protein from Bacillus subtilis (strain 168).